Consider the following 218-residue polypeptide: Elongation factor Ts (218 aa).

The tract at residues T82–V85 is involved in Mg(2+) ion dislocation from EF-Tu.

This sequence belongs to the EF-Ts family.

It is found in the cytoplasm. Functionally, associates with the EF-Tu.GDP complex and induces the exchange of GDP to GTP. It remains bound to the aminoacyl-tRNA.EF-Tu.GTP complex up to the GTP hydrolysis stage on the ribosome. In Prochlorococcus marinus (strain MIT 9301), this protein is Elongation factor Ts.